The following is a 474-amino-acid chain: Glutathione synthetase (474 aa).

Ala-2 is subject to N-acetylalanine. Arg-125 contributes to the substrate binding site. Glu-144 lines the ATP pocket. Mg(2+) contacts are provided by Glu-144 and Asn-146. Substrate-binding positions include 148–151 (ISAS), 214–216 (ERN), Gln-220, and 267–270 (RDGY). ATP is bound by residues Lys-305, 364–373 (KPQREGGGNN), Tyr-375, and 398–401 (MEKT). Glu-368 contributes to the Mg(2+) binding site. Ser-415 is subject to Phosphoserine. Residue Glu-425 coordinates ATP. Arg-450 is a substrate binding site. ATP contacts are provided by Lys-452 and Asp-458. Substrate is bound at residue 461-462 (VA).

Belongs to the eukaryotic GSH synthase family. In terms of assembly, homodimer. The cofactor is Mg(2+).

The enzyme catalyses gamma-L-glutamyl-L-cysteine + glycine + ATP = glutathione + ADP + phosphate + H(+). It functions in the pathway sulfur metabolism; glutathione biosynthesis; glutathione from L-cysteine and L-glutamate: step 2/2. Catalyzes the production of glutathione from gamma-glutamylcysteine and glycine in an ATP-dependent manner. Glutathione (gamma-glutamylcysteinylglycine, GSH) is the most abundant intracellular thiol in living aerobic cells and is required for numerous processes including the protection of cells against oxidative damage, amino acid transport, the detoxification of foreign compounds, the maintenance of protein sulfhydryl groups in a reduced state and acts as a cofactor for a number of enzymes. The polypeptide is Glutathione synthetase (GSS) (Macaca fascicularis (Crab-eating macaque)).